Reading from the N-terminus, the 363-residue chain is Histidinol-phosphate aminotransferase (363 aa).

An N6-(pyridoxal phosphate)lysine modification is found at Lys218.

It belongs to the class-II pyridoxal-phosphate-dependent aminotransferase family. Histidinol-phosphate aminotransferase subfamily. Homodimer. Pyridoxal 5'-phosphate is required as a cofactor.

It catalyses the reaction L-histidinol phosphate + 2-oxoglutarate = 3-(imidazol-4-yl)-2-oxopropyl phosphate + L-glutamate. The protein operates within amino-acid biosynthesis; L-histidine biosynthesis; L-histidine from 5-phospho-alpha-D-ribose 1-diphosphate: step 7/9. The polypeptide is Histidinol-phosphate aminotransferase (Xanthomonas axonopodis pv. citri (strain 306)).